Reading from the N-terminus, the 320-residue chain is ATP-dependent 6-phosphofructokinase (320 aa).

G12 is an ATP binding site. ADP contacts are provided by residues 22 to 26 (RGVVR) and 55 to 60 (RYSVSD). ATP contacts are provided by residues 73–74 (RF) and 103–106 (GDGS). D104 is a binding site for Mg(2+). A substrate-binding site is contributed by 126 to 128 (TID). Catalysis depends on D128, which acts as the Proton acceptor. Residue R155 participates in ADP binding. Substrate contacts are provided by residues R163 and 170–172 (MGR). Residues 186–188 (GCE), K212, and 214–216 (KKH) each bind ADP. Substrate is bound by residues E223, R244, and 250 to 253 (HIQR).

Belongs to the phosphofructokinase type A (PFKA) family. ATP-dependent PFK group I subfamily. Prokaryotic clade 'B1' sub-subfamily. As to quaternary structure, homotetramer. Mg(2+) serves as cofactor.

The protein localises to the cytoplasm. It catalyses the reaction beta-D-fructose 6-phosphate + ATP = beta-D-fructose 1,6-bisphosphate + ADP + H(+). It functions in the pathway carbohydrate degradation; glycolysis; D-glyceraldehyde 3-phosphate and glycerone phosphate from D-glucose: step 3/4. Its activity is regulated as follows. Allosterically activated by ADP and other diphosphonucleosides, and allosterically inhibited by phosphoenolpyruvate. Functionally, catalyzes the phosphorylation of D-fructose 6-phosphate to fructose 1,6-bisphosphate by ATP, the first committing step of glycolysis. The polypeptide is ATP-dependent 6-phosphofructokinase (Citrobacter koseri (strain ATCC BAA-895 / CDC 4225-83 / SGSC4696)).